Consider the following 326-residue polypeptide: Protein SEH1 (326 aa).

WD repeat units lie at residues 7-46 (TLDS…SSTF), 54-95 (VSES…AHGL), 105-146 (NKSS…ELKN), 224-266 (DKGD…DLEG), and 278-317 (GHQG…EWHE).

Belongs to the WD repeat SEC13 family. Part of the nuclear pore complex (NPC). The NPC has an eight-fold symmetrical structure comprising a central transport channel and two rings, the cytoplasmic and nuclear rings, to which eight filaments are attached. The cytoplasmic filaments have loose ends, while the nuclear filaments are joined in a distal ring, forming a nuclear basket. NPCs are highly dynamic in configuration and composition, and can be devided in 3 subcomplexes, the NUP62 subcomplex, the NUP107-160 subcomplex and the NUP93 subcomplex, containing approximately 30 different nucleoporin proteins.

It localises to the nucleus envelope. It is found in the nucleus. The protein resides in the cytoplasm. Its subcellular location is the nuclear pore complex. Functionally, required for proper export of mRNAs from the nucleus to the cytoplasm. The polypeptide is Protein SEH1 (Arabidopsis thaliana (Mouse-ear cress)).